The sequence spans 309 residues: Methionyl-tRNA formyltransferase (309 aa).

(6S)-5,6,7,8-tetrahydrofolate is bound at residue 112-115; sequence SLLP.

This sequence belongs to the Fmt family.

It catalyses the reaction L-methionyl-tRNA(fMet) + (6R)-10-formyltetrahydrofolate = N-formyl-L-methionyl-tRNA(fMet) + (6S)-5,6,7,8-tetrahydrofolate + H(+). In terms of biological role, attaches a formyl group to the free amino group of methionyl-tRNA(fMet). The formyl group appears to play a dual role in the initiator identity of N-formylmethionyl-tRNA by promoting its recognition by IF2 and preventing the misappropriation of this tRNA by the elongation apparatus. The chain is Methionyl-tRNA formyltransferase from Bartonella bacilliformis (strain ATCC 35685 / KC583 / Herrer 020/F12,63).